The following is a 410-amino-acid chain: 3-phosphoshikimate 1-carboxyvinyltransferase (410 aa).

3 residues coordinate 3-phosphoshikimate: K20, S21, and R25. K20 provides a ligand contact to phosphoenolpyruvate. A phosphoenolpyruvate-binding site is contributed by R115. S157, S158, Q159, S183, D293, and K320 together coordinate 3-phosphoshikimate. Residue Q159 participates in phosphoenolpyruvate binding. The active-site Proton acceptor is D293. 3 residues coordinate phosphoenolpyruvate: R324, R365, and K391.

It belongs to the EPSP synthase family. Monomer.

Its subcellular location is the cytoplasm. It carries out the reaction 3-phosphoshikimate + phosphoenolpyruvate = 5-O-(1-carboxyvinyl)-3-phosphoshikimate + phosphate. Its pathway is metabolic intermediate biosynthesis; chorismate biosynthesis. In terms of biological role, catalyzes the transfer of the enolpyruvyl moiety of phosphoenolpyruvate (PEP) to the 5-hydroxyl of shikimate-3-phosphate (S3P) to produce enolpyruvyl shikimate-3-phosphate and inorganic phosphate. This chain is 3-phosphoshikimate 1-carboxyvinyltransferase, found in Thermoplasma acidophilum (strain ATCC 25905 / DSM 1728 / JCM 9062 / NBRC 15155 / AMRC-C165).